The following is a 462-amino-acid chain: Glycoprotein endo-alpha-1,2-mannosidase (462 aa).

Residues 1–9 (MAKFRRRTC) are Cytoplasmic-facing. The chain crosses the membrane as a helical; Signal-anchor for type II membrane protein span at residues 10-30 (ILLSLFILFIFSLMMGLKMLW). Residues 31–462 (PNAASFGPPF…YALDQQQPAS (432 aa)) are Lumenal-facing. Residues 60-462 (DFQRSDRINM…YALDQQQPAS (403 aa)) are catalytic.

It belongs to the glycosyl hydrolase 99 family. Post-translationally, undergoes proteolytic cleavage in the C-terminal region.

The protein localises to the golgi apparatus membrane. It carries out the reaction N-{alpha-Glc-(1-&gt;3)-alpha-Man-(1-&gt;2)-alpha-Man-(1-&gt;2)-alpha-Man-(1-&gt;3)-[alpha-Man-(1-&gt;2)-alpha-Man-(1-&gt;3)-[alpha-Man-(1-&gt;2)-alpha-Man-(1-&gt;6)]-alpha-Man-(1-&gt;6)]-beta-Man-(1-&gt;4)-beta-GlcNAc-(1-&gt;4)-beta-GlcNAc}-L-asparaginyl-[protein] + H2O = alpha-D-glucosyl-(1-&gt;3)-D-mannopyranose + N(4)-{alpha-D-Man-(1-&gt;2)-alpha-D-Man-(1-&gt;3)-[alpha-D-Man-(1-&gt;2)-alpha-D-Man-(1-&gt;3)-[alpha-D-Man-(1-&gt;2)-alpha-D-Man-(1-&gt;6)]-alpha-D-Man-(1-&gt;6)]-beta-D-Man-(1-&gt;4)-beta-D-GlaNAc-(1-&gt;4)-beta-D-GlcNAc}-L-asparaginyl-[protein] (N-glucan mannose isomer 8A1,2,3B1,2). In Mus musculus (Mouse), this protein is Glycoprotein endo-alpha-1,2-mannosidase (Manea).